We begin with the raw amino-acid sequence, 188 residues long: NANOG neighbor homeobox (188 aa).

A disordered region spans residues 28–106 (ETILANKKQS…NEKQKQYPEK (79 aa)). Over residues 57-106 (QNGKQKWREEGEAGRKREREKEEKNEKELQDEQENKRKRENEKQKQYPEK) the composition is skewed to basic and acidic residues. The segment at residues 102-161 (QYPEKRLVSKSLMHTLWAKFKLNRCPTIQESLSLSFEFDMTHKQISQWFCKTRKKYNKEM) is a DNA-binding region (homeobox).

The protein resides in the nucleus. This is NANOG neighbor homeobox (NANOGNB) from Homo sapiens (Human).